The chain runs to 632 residues: 1-deoxy-D-xylulose-5-phosphate synthase (632 aa).

Thiamine diphosphate-binding positions include His79 and 120 to 122 (GHA). Asp151 is a Mg(2+) binding site. Thiamine diphosphate-binding positions include 152-153 (GS), Asn180, Phe292, and Glu376. Residue Asn180 coordinates Mg(2+).

It belongs to the transketolase family. DXPS subfamily. Homodimer. Mg(2+) is required as a cofactor. The cofactor is thiamine diphosphate.

It carries out the reaction D-glyceraldehyde 3-phosphate + pyruvate + H(+) = 1-deoxy-D-xylulose 5-phosphate + CO2. Its pathway is metabolic intermediate biosynthesis; 1-deoxy-D-xylulose 5-phosphate biosynthesis; 1-deoxy-D-xylulose 5-phosphate from D-glyceraldehyde 3-phosphate and pyruvate: step 1/1. Catalyzes the acyloin condensation reaction between C atoms 2 and 3 of pyruvate and glyceraldehyde 3-phosphate to yield 1-deoxy-D-xylulose-5-phosphate (DXP). In Azobacteroides pseudotrichonymphae genomovar. CFP2, this protein is 1-deoxy-D-xylulose-5-phosphate synthase.